The following is a 69-amino-acid chain: Guanine nucleotide-binding protein G(I)/G(S)/G(O) subunit gamma-T2 (69 aa).

The residue at position 66 (cysteine 66) is a Cysteine methyl ester. A lipid anchor (S-farnesyl cysteine) is attached at cysteine 66. A propeptide spans 67-69 (LIS) (removed in mature form).

The protein belongs to the G protein gamma family. As to quaternary structure, g proteins are composed of 3 units, alpha, beta and gamma. Retinal cones.

It is found in the cell membrane. Functionally, guanine nucleotide-binding proteins (G proteins) are involved as a modulator or transducer in various transmembrane signaling systems. The beta and gamma chains are required for the GTPase activity, for replacement of GDP by GTP, and for G protein-effector interaction. In Homo sapiens (Human), this protein is Guanine nucleotide-binding protein G(I)/G(S)/G(O) subunit gamma-T2 (GNGT2).